The primary structure comprises 89 residues: Small ribosomal subunit protein uS19 (89 aa).

It belongs to the universal ribosomal protein uS19 family.

Protein S19 forms a complex with S13 that binds strongly to the 16S ribosomal RNA. The polypeptide is Small ribosomal subunit protein uS19 (Akkermansia muciniphila (strain ATCC BAA-835 / DSM 22959 / JCM 33894 / BCRC 81048 / CCUG 64013 / CIP 107961 / Muc)).